A 624-amino-acid polypeptide reads, in one-letter code: (-)-beta-phellandrene synthase 3, chloroplastic (624 aa).

The transit peptide at 1–48 (MAIVSSVPLASKSCLHKSLISSIHKLKPFCRTIPTLGMSRPGKYVMPS) directs the protein to the chloroplast. The Mg(2+) site is built by Asp-375, Asp-379, and Asp-527. The DDXXD motif motif lies at 375–379 (DDMYD).

The protein belongs to the terpene synthase family. Tpsd subfamily. The cofactor is Mg(2+). It depends on Mn(2+) as a cofactor.

The protein localises to the plastid. The protein resides in the chloroplast. It catalyses the reaction (2E)-geranyl diphosphate = (-)-beta-phellandrene + diphosphate. Its pathway is terpene metabolism; oleoresin biosynthesis. Terpene synthase (TPS) involved in the biosynthesis of monoterpene natural products included in conifer oleoresin secretions and volatile emissions; these compounds contribute to biotic and abiotic stress defense against herbivores and pathogens. Catalyzes the conversion of (2E)-geranyl diphosphate (GPP) to (-)-beta-phellandrene. The chain is (-)-beta-phellandrene synthase 3, chloroplastic from Picea sitchensis (Sitka spruce).